The primary structure comprises 184 residues: V-type proton ATPase subunit E (184 aa).

The protein belongs to the V-ATPase E subunit family.

Its function is as follows. Produces ATP from ADP in the presence of a proton gradient across the membrane. The sequence is that of V-type proton ATPase subunit E from Finegoldia magna (strain ATCC 29328 / DSM 20472 / WAL 2508) (Peptostreptococcus magnus).